A 199-amino-acid chain; its full sequence is Pyridoxal 5'-phosphate synthase subunit PdxT (199 aa).

Residue 52–54 (GES) participates in L-glutamine binding. The active-site Nucleophile is the C84. Residues R115 and 143–144 (IR) each bind L-glutamine. Residues H179 and E181 each act as charge relay system in the active site.

It belongs to the glutaminase PdxT/SNO family. In the presence of PdxS, forms a dodecamer of heterodimers. Only shows activity in the heterodimer.

The enzyme catalyses aldehydo-D-ribose 5-phosphate + D-glyceraldehyde 3-phosphate + L-glutamine = pyridoxal 5'-phosphate + L-glutamate + phosphate + 3 H2O + H(+). It carries out the reaction L-glutamine + H2O = L-glutamate + NH4(+). The protein operates within cofactor biosynthesis; pyridoxal 5'-phosphate biosynthesis. Functionally, catalyzes the hydrolysis of glutamine to glutamate and ammonia as part of the biosynthesis of pyridoxal 5'-phosphate. The resulting ammonia molecule is channeled to the active site of PdxS. The protein is Pyridoxal 5'-phosphate synthase subunit PdxT of Methanosarcina mazei (strain ATCC BAA-159 / DSM 3647 / Goe1 / Go1 / JCM 11833 / OCM 88) (Methanosarcina frisia).